A 659-amino-acid polypeptide reads, in one-letter code: Pseudouridylate synthase 7 homolog (659 aa).

M1 carries the N-acetylmethionine modification. Polar residues-rich tracts occupy residues 1 to 10 (MEMTEMTSVS) and 39 to 54 (CPTT…SLPS). The segment at 1 to 99 (MEMTEMTSVS…EEEEEEAESF (99 aa)) is disordered. Residue S10 is modified to Phosphoserine. The span at 75 to 98 (PSEEEEEEDGLSEEEEEEEEEAES) shows a compositional bias: acidic residues. Residue S125 is modified to Phosphoserine. D292 functions as the Nucleophile in the catalytic mechanism. In terms of domain architecture, TRUD spans 368 to 578 (GFINYYGMQR…SGAYRKIIIR (211 aa)).

This sequence belongs to the pseudouridine synthase TruD family. Interacts with SIRT1.

Its subcellular location is the nucleus. The catalysed reaction is a uridine in tRNA = a pseudouridine in tRNA. It catalyses the reaction uridine(13) in tRNA = pseudouridine(13) in tRNA. The enzyme catalyses a uridine in mRNA = a pseudouridine in mRNA. Functionally, pseudouridylate synthase that catalyzes pseudouridylation of RNAs. Acts as a regulator of protein synthesis in embryonic stem cells by mediating pseudouridylation of RNA fragments derived from tRNAs (tRFs): pseudouridylated tRFs inhibit translation by targeting the translation initiation complex. Also catalyzes pseudouridylation of mRNAs: mediates pseudouridylation of mRNAs with the consensus sequence 5'-UGUAG-3'. Acts as a regulator of pre-mRNA splicing by mediating pseudouridylation of pre-mRNAs at locations associated with alternatively spliced regions. Pseudouridylation of pre-mRNAs near splice sites directly regulates mRNA splicing and mRNA 3'-end processing. In addition to mRNAs and tRNAs, binds other types of RNAs, such as snRNAs, Y RNAs and vault RNAs, suggesting that it can catalyze pseudouridylation of many RNA types. This Bos taurus (Bovine) protein is Pseudouridylate synthase 7 homolog.